The sequence spans 590 residues: Auxin response factor 20 (590 aa).

Residues 126 to 224 (FTKVLTASDT…ELRVGIRRAR (99 aa)) constitute a DNA-binding region (TF-B3). Residues 495–576 (RTCTKVQMQG…MVKKILIYSK (82 aa)) enclose the PB1 domain.

This sequence belongs to the ARF family. Homodimers and heterodimers.

The protein localises to the nucleus. In terms of biological role, auxin response factors (ARFs) are transcriptional factors that bind specifically to the DNA sequence 5'-TGTCTC-3' found in the auxin-responsive promoter elements (AuxREs). Could act as transcriptional activator or repressor. Formation of heterodimers with Aux/IAA proteins may alter their ability to modulate early auxin response genes expression. This chain is Auxin response factor 20 (ARF20), found in Arabidopsis thaliana (Mouse-ear cress).